The chain runs to 207 residues: Outer-membrane lipoprotein LolB (207 aa).

Residues 1–21 form the signal peptide; the sequence is MPMRKRHFYRLLPLASLLLAA. Cys22 carries N-palmitoyl cysteine lipidation. Cys22 carries S-diacylglycerol cysteine lipidation.

The protein belongs to the LolB family. Monomer.

The protein localises to the cell outer membrane. In terms of biological role, plays a critical role in the incorporation of lipoproteins in the outer membrane after they are released by the LolA protein. This is Outer-membrane lipoprotein LolB from Yersinia pseudotuberculosis serotype O:3 (strain YPIII).